Consider the following 202-residue polypeptide: Imidazoleglycerol-phosphate dehydratase (202 aa).

Belongs to the imidazoleglycerol-phosphate dehydratase family.

It is found in the cytoplasm. It catalyses the reaction D-erythro-1-(imidazol-4-yl)glycerol 3-phosphate = 3-(imidazol-4-yl)-2-oxopropyl phosphate + H2O. It participates in amino-acid biosynthesis; L-histidine biosynthesis; L-histidine from 5-phospho-alpha-D-ribose 1-diphosphate: step 6/9. This is Imidazoleglycerol-phosphate dehydratase from Brucella abortus (strain S19).